A 146-amino-acid chain; its full sequence is D-aminoacyl-tRNA deacylase (146 aa).

Positions 137–138 match the Gly-cisPro motif, important for rejection of L-amino acids motif; the sequence is GP.

It belongs to the DTD family. Homodimer.

It localises to the cytoplasm. It carries out the reaction glycyl-tRNA(Ala) + H2O = tRNA(Ala) + glycine + H(+). The enzyme catalyses a D-aminoacyl-tRNA + H2O = a tRNA + a D-alpha-amino acid + H(+). In terms of biological role, an aminoacyl-tRNA editing enzyme that deacylates mischarged D-aminoacyl-tRNAs. Also deacylates mischarged glycyl-tRNA(Ala), protecting cells against glycine mischarging by AlaRS. Acts via tRNA-based rather than protein-based catalysis; rejects L-amino acids rather than detecting D-amino acids in the active site. By recycling D-aminoacyl-tRNA to D-amino acids and free tRNA molecules, this enzyme counteracts the toxicity associated with the formation of D-aminoacyl-tRNA entities in vivo and helps enforce protein L-homochirality. The polypeptide is D-aminoacyl-tRNA deacylase (Deinococcus deserti (strain DSM 17065 / CIP 109153 / LMG 22923 / VCD115)).